A 107-amino-acid chain; its full sequence is Nucleoid-associated protein YaaK (107 aa).

The segment at 1-24 (MRGGMGNMQKMMKQMQKMQKDMAK) is disordered. Low complexity predominate over residues 8–17 (MQKMMKQMQK).

The protein belongs to the YbaB/EbfC family. As to quaternary structure, homodimer.

It localises to the cytoplasm. The protein localises to the nucleoid. Functionally, binds to DNA and alters its conformation. May be involved in regulation of gene expression, nucleoid organization and DNA protection. This is Nucleoid-associated protein YaaK (yaaK) from Bacillus subtilis (strain 168).